Here is a 66-residue protein sequence, read N- to C-terminus: Conotoxin Lt5.6 (66 aa).

The first 19 residues, 1 to 19, serve as a signal peptide directing secretion; that stretch reads MLCLPVFIILLLLASPAAP. The propeptide occupies 20–54; it reads KSLETRIQNDLIRAGLTDADLKTEKGFLSGLLNVA.

Belongs to the conotoxin T superfamily. In terms of processing, contains 2 disulfide bonds that can be either 'C1-C3, C2-C4' or 'C1-C4, C2-C3', since these disulfide connectivities have been observed for conotoxins with cysteine framework V (for examples, see AC P0DQQ7 and AC P81755). Expressed by the venom duct.

It localises to the secreted. The chain is Conotoxin Lt5.6 from Conus litteratus (Lettered cone).